Here is a 286-residue protein sequence, read N- to C-terminus: Ribosomal RNA small subunit methyltransferase A (286 aa).

Asn-28, Leu-30, Gly-55, Glu-77, Asp-103, and Asn-123 together coordinate S-adenosyl-L-methionine.

This sequence belongs to the class I-like SAM-binding methyltransferase superfamily. rRNA adenine N(6)-methyltransferase family. RsmA subfamily.

The protein resides in the cytoplasm. The enzyme catalyses adenosine(1518)/adenosine(1519) in 16S rRNA + 4 S-adenosyl-L-methionine = N(6)-dimethyladenosine(1518)/N(6)-dimethyladenosine(1519) in 16S rRNA + 4 S-adenosyl-L-homocysteine + 4 H(+). Its function is as follows. Specifically dimethylates two adjacent adenosines (A1518 and A1519) in the loop of a conserved hairpin near the 3'-end of 16S rRNA in the 30S particle. May play a critical role in biogenesis of 30S subunits. The chain is Ribosomal RNA small subunit methyltransferase A from Bradyrhizobium sp. (strain BTAi1 / ATCC BAA-1182).